We begin with the raw amino-acid sequence, 283 residues long: Thymidylate synthase (283 aa).

Arg-22 provides a ligand contact to dUMP. The Nucleophile role is filled by Cys-160. DUMP contacts are provided by residues 180–183 (RSCD), Asn-191, and 221–223 (HIY). Residue Asp-183 coordinates (6R)-5,10-methylene-5,6,7,8-tetrahydrofolate. Ala-282 serves as a coordination point for (6R)-5,10-methylene-5,6,7,8-tetrahydrofolate.

The protein belongs to the thymidylate synthase family. Bacterial-type ThyA subfamily. As to quaternary structure, homodimer.

The protein resides in the cytoplasm. The catalysed reaction is dUMP + (6R)-5,10-methylene-5,6,7,8-tetrahydrofolate = 7,8-dihydrofolate + dTMP. Its pathway is pyrimidine metabolism; dTTP biosynthesis. Its function is as follows. Catalyzes the reductive methylation of 2'-deoxyuridine-5'-monophosphate (dUMP) to 2'-deoxythymidine-5'-monophosphate (dTMP) while utilizing 5,10-methylenetetrahydrofolate (mTHF) as the methyl donor and reductant in the reaction, yielding dihydrofolate (DHF) as a by-product. This enzymatic reaction provides an intracellular de novo source of dTMP, an essential precursor for DNA biosynthesis. The sequence is that of Thymidylate synthase from Colwellia psychrerythraea (strain 34H / ATCC BAA-681) (Vibrio psychroerythus).